A 353-amino-acid chain; its full sequence is Ribosomal RNA small subunit methyltransferase C (353 aa).

It belongs to the methyltransferase superfamily. RsmC family. Monomer.

The protein localises to the cytoplasm. The catalysed reaction is guanosine(1207) in 16S rRNA + S-adenosyl-L-methionine = N(2)-methylguanosine(1207) in 16S rRNA + S-adenosyl-L-homocysteine + H(+). Specifically methylates the guanine in position 1207 of 16S rRNA in the 30S particle. The polypeptide is Ribosomal RNA small subunit methyltransferase C (Marinomonas sp. (strain MWYL1)).